The chain runs to 171 residues: Lipoprotein signal peptidase (171 aa).

Transmembrane regions (helical) follow at residues 12 to 32 (WYWV…WVLA), 67 to 87 (WQRW…TVWL), and 93 to 113 (SLLK…GNLV). Catalysis depends on residues D123 and D141. Residues 137–157 (FNIADSAICIGAVLIIWDAFL) traverse the membrane as a helical segment.

The protein belongs to the peptidase A8 family.

Its subcellular location is the cell inner membrane. It carries out the reaction Release of signal peptides from bacterial membrane prolipoproteins. Hydrolyzes -Xaa-Yaa-Zaa-|-(S,diacylglyceryl)Cys-, in which Xaa is hydrophobic (preferably Leu), and Yaa (Ala or Ser) and Zaa (Gly or Ala) have small, neutral side chains.. It functions in the pathway protein modification; lipoprotein biosynthesis (signal peptide cleavage). In terms of biological role, this protein specifically catalyzes the removal of signal peptides from prolipoproteins. This chain is Lipoprotein signal peptidase, found in Shewanella baltica (strain OS223).